Reading from the N-terminus, the 396-residue chain is Schizokinen exporter SchE (396 aa).

The N-terminal stretch at 1–25 (MLPKLILLATLYISQFIPTTFFIQA) is a signal peptide. At 26–39 (LPVFMRQQKMSLDV) the chain is on the cytoplasmic side. The helical transmembrane segment at 40 to 60 (IGFLGLLILPSGLKFLWSPFI) threads the bilayer. The Periplasmic segment spans residues 61 to 73 (DRYRLGKLGHYRG). Residues 74 to 94 (WIICFQLLLISTMLVTAFIDI) form a helical membrane-spanning segment. The Cytoplasmic portion of the chain corresponds to 95-104 (QDNLNAFLTC). Residues 105–127 (MFLASLFSSSQDIATDALAVNLL) form a helical membrane-spanning segment. Topologically, residues 128-137 (EPQERGLGNA) are periplasmic. Residues 138-158 (IQSGGNIFGAIIGGGVMLILL) traverse the membrane as a helical segment. Topologically, residues 159 to 162 (DKIG) are cytoplasmic. Residues 163–183 (WRYSLITLSIFMLINLVPILI) form a helical membrane-spanning segment. At 184-214 (YREKSQHQLENSTFFRSYFQPFISFLSRPKA) the chain is on the periplasmic side. The chain crosses the membrane as a helical span at residues 215 to 235 (LPWLFVVLLYMMGDSVTSLMI). The Cytoplasmic portion of the chain corresponds to 236 to 251 (RPLLVDRGLSLPDIGW). A helical membrane pass occupies residues 252–272 (ILGIVSYSARIVSALIAGLVI). Residues 273–281 (VKLGRIKSL) lie on the Periplasmic side of the membrane. Residues 282–302 (IIFGFIADLTTLLYIIPAIGV) form a helical membrane-spanning segment. Topologically, residues 303-304 (SS) are cytoplasmic. A helical membrane pass occupies residues 305–325 (LLVLYTVCIIVNATQSMAYTA). Topologically, residues 326–346 (LLSAMMDKCEKNTAATDYTMQ) are periplasmic. 2 helical membrane-spanning segments follow: residues 347-367 (VSVMFLGGIAATVLSGMLATT) and 368-388 (MGYSFIFIMSAAVSLLSVFLI). The Periplasmic segment spans residues 389–396 (TQEYGVSS).

This sequence belongs to the major facilitator superfamily.

It localises to the cell inner membrane. In terms of biological role, involved in the TolC-like protein HgdD-dependent secretion of schizokinen, a dihydroxamate-type siderophore. Transports schizokinen from the cytoplasm to the periplasm. This is Schizokinen exporter SchE from Nostoc sp. (strain PCC 7120 / SAG 25.82 / UTEX 2576).